A 218-amino-acid chain; its full sequence is 3,4-dihydroxy-2-butanone 4-phosphate synthase (218 aa).

D-ribulose 5-phosphate contacts are provided by residues arginine 38–glutamate 39, aspartate 43, arginine 151–threonine 155, and glutamate 175. Glutamate 39 is a Mg(2+) binding site. Histidine 154 provides a ligand contact to Mg(2+).

It belongs to the DHBP synthase family. Homodimer. Mg(2+) is required as a cofactor. The cofactor is Mn(2+).

The catalysed reaction is D-ribulose 5-phosphate = (2S)-2-hydroxy-3-oxobutyl phosphate + formate + H(+). The protein operates within cofactor biosynthesis; riboflavin biosynthesis; 2-hydroxy-3-oxobutyl phosphate from D-ribulose 5-phosphate: step 1/1. Catalyzes the conversion of D-ribulose 5-phosphate to formate and 3,4-dihydroxy-2-butanone 4-phosphate. The polypeptide is 3,4-dihydroxy-2-butanone 4-phosphate synthase (Vibrio atlanticus (strain LGP32) (Vibrio splendidus (strain Mel32))).